The following is a 213-amino-acid chain: MKAYQREFIEFALNKQVLKFGEFTLKSGRISPYFFNAGLFNTGLELAKLGRFYAAALMDCGVEFDLLFGPAYKGIPIATTTAVALAEHHNRDLPYCFNRKEAKDHGEGGSLVGSPLEGRVMLVDDVITAGTAIRESMEIINAQGATLAGVMISLDRQERGRGEISAIQEVERDYHCKVIAIVTLNDVISYLEEKPEMADHLAAVRHYREQYGV.

Lys-26 lines the 5-phospho-alpha-D-ribose 1-diphosphate pocket. 34-35 contributes to the orotate binding site; it reads FF. Residues 72–73, Arg-99, Lys-100, Lys-103, His-105, and 124–132 each bind 5-phospho-alpha-D-ribose 1-diphosphate; these read YK and DDVITAGTA. Residues Thr-128 and Arg-156 each coordinate orotate.

The protein belongs to the purine/pyrimidine phosphoribosyltransferase family. PyrE subfamily. In terms of assembly, homodimer. Mg(2+) serves as cofactor.

The enzyme catalyses orotidine 5'-phosphate + diphosphate = orotate + 5-phospho-alpha-D-ribose 1-diphosphate. It participates in pyrimidine metabolism; UMP biosynthesis via de novo pathway; UMP from orotate: step 1/2. Functionally, catalyzes the transfer of a ribosyl phosphate group from 5-phosphoribose 1-diphosphate to orotate, leading to the formation of orotidine monophosphate (OMP). The chain is Orotate phosphoribosyltransferase from Yersinia enterocolitica serotype O:8 / biotype 1B (strain NCTC 13174 / 8081).